We begin with the raw amino-acid sequence, 725 residues long: MNLSLSGRKIAMTRVSAETQYITPIGSPTLDELLKDCDSFRKGDSGDGVKSDDPAHHIIDVEALYVKPVPYVLNFNNLQYDVTLRRRFGFSRQNGVKTLLDDVSGEASDGDILAVLGASGAGKSTLIDALAGRVAEGSLRGSVTLNGEKVLQSRLLKVISAYVMQDDLLFPMLTVKETLMFASEFRLPRSLSKSKKMERVEALIDQLGLRNAANTVIGDEGHRGVSGGERRRVSIGIDIIHDPIVLFLDEPTSGLDSTNAFMVVQVLKRIAQSGSIVIMSIHQPSARIVELLDRLIILSRGKSVFNGSPASLPGFFSDFGRPIPEKENISEFALDLVRELEGSNEGTKALVDFNEKWQQNKISLIQSAPQTNKLDQDRSLSLKEAINASVSRGKLVSGSSRSNPTSMETVSSYANPSLFETFILAKRYMKNWIRMPELVGTRIATVMVTGCLLATVYWKLDHTPRGAQERLTLFAFVVPTMFYCCLDNVPVFIQERYIFLRETTHNAYRTSSYVISHSLVSLPQLLAPSLVFSAITFWTVGLSGGLEGFVFYCLLIYASFWSGSSVVTFISGVVPNIMLCYMVSITYLAYCLLLSGFYVNRDRIPFYWTWFHYISILKYPYEAVLINEFDDPSRCFVRGVQVFDSTLLGGVSDSGKVKLLETLSKSLRTKITESTCLRTGSDLLAQQGITQLSKWDCLWITFASGLFFRILFYFALLFGSRNKRT.

The 253-residue stretch at 73–325 (LNFNNLQYDV…FSDFGRPIPE (253 aa)) folds into the ABC transporter domain. 117–124 (GASGAGKS) contributes to the ATP binding site. In terms of domain architecture, ABC transmembrane type-2 spans 419-629 (FETFILAKRY…PYEAVLINEF (211 aa)). Helical transmembrane passes span 438-458 (LVGT…TVYW), 473-493 (LFAF…PVFI), 515-535 (ISHS…FSAI), 537-557 (FWTV…LLIY), 577-597 (IMLC…LSGF), 606-626 (FYWT…AVLI), and 698-718 (LWIT…ALLF).

The protein belongs to the ABC transporter superfamily. ABCG family. Eye pigment precursor importer (TC 3.A.1.204) subfamily.

It is found in the vacuole membrane. In terms of biological role, confers selective resistance to kanamycin. In Arabidopsis thaliana (Mouse-ear cress), this protein is ABC transporter G family member 19 (ABCG19).